A 129-amino-acid chain; its full sequence is N16.5 matrix protein (129 aa).

Positions 1-23 (MTCTLRWTITALVLLGICHLARP) are cleaved as a signal peptide. 5 repeat units span residues 91-92 (NG), 93-94 (NG), 95-96 (NG), 97-98 (NG), and 99-100 (NG). The 5 X 2 AA tandem repeats of N-G stretch occupies residues 91–100 (NGNGNGNGNG).

Belongs to the N16 matrix protein family. As to quaternary structure, heterooligomer; disulfide-linked. Pif97, Pif80, N16 and other proteins form a complex. As to expression, component of conchiolin, the organic matrix of nacre. Specifically expressed in mantle epithelium.

The protein localises to the secreted. It is found in the extracellular space. Its subcellular location is the extracellular matrix. Its function is as follows. May be specifically involved in the formation of the nacreous layer. This chain is N16.5 matrix protein, found in Pinctada fucata (Akoya pearl oyster).